A 277-amino-acid polypeptide reads, in one-letter code: Sulfur carrier protein FdhD (277 aa).

C121 functions as the Cysteine persulfide intermediate in the catalytic mechanism. 260-265 (FCKPGR) is a Mo-bis(molybdopterin guanine dinucleotide) binding site.

It belongs to the FdhD family.

Its subcellular location is the cytoplasm. Functionally, required for formate dehydrogenase (FDH) activity. Acts as a sulfur carrier protein that transfers sulfur from IscS to the molybdenum cofactor prior to its insertion into FDH. The protein is Sulfur carrier protein FdhD of Escherichia coli O8 (strain IAI1).